A 563-amino-acid polypeptide reads, in one-letter code: Minor fimbrium subunit Mfa1 (563 aa).

The signal sequence occupies residues 1–19 (MKLNKMFLVGALLSLGFAS). C20 carries the N-palmitoyl cysteine lipid modification. Residue C20 is the site of S-diacylglycerol cysteine attachment. A propeptide spanning residues 20-49 (CSKEGNGPDPDNAAKSYMSMTLSMPMGSAR) is cleaved from the precursor. A disordered region spans residues 504-543 (LVPDPDPSNPENPNNPDPNPDEPGTPVPTDPENPLPDQDT). The segment covering 505-537 (VPDPDPSNPENPNNPDPNPDEPGTPVPTDPENP) has biased composition (pro residues).

The protein belongs to the bacteroidetes fimbrillin superfamily. Structural component of the fimbrial stalk. Minor fimbriae are composed of a structural subunit, most often Mfa1, and the accessory subunits Mfa3, Mfa4 and Mfa5. Mfa1 interacts with Mfa2; this anchors the fimbrium in the membrane. Fimbrium assembly occurs by linear, head-to-tail oligomerization of fimbrial subunits. This is mediated via insertion of a C-terminal beta-strand from one subunit into a groove in the N-terminal domain of the following subunit. Interacts with S.gordonii ssp5.

The protein localises to the fimbrium. Its subcellular location is the cell outer membrane. Structural subunit of the minor fimbriae. These filamentous pili are attached to the cell surface; they mediate biofilm formation, adhesion onto host cells and onto other bacteria that are part of the oral microbiome. They play an important role in invasion of periodontal tissues and are recognized as major virulence factors. Mfa1 orthologs from different strains have highly divergent sequences, and this correlates with pathogenicity. This chain is Minor fimbrium subunit Mfa1, found in Porphyromonas gingivalis (strain ATCC 33277 / DSM 20709 / CIP 103683 / JCM 12257 / NCTC 11834 / 2561).